A 203-amino-acid chain; its full sequence is Pyridoxal 5'-phosphate synthase subunit PdxT (203 aa).

52–54 (GES) provides a ligand contact to L-glutamine. C84 serves as the catalytic Nucleophile. L-glutamine-binding positions include R116 and 144–145 (IR). Active-site charge relay system residues include H184 and E186.

Belongs to the glutaminase PdxT/SNO family. In the presence of PdxS, forms a dodecamer of heterodimers. Only shows activity in the heterodimer.

The catalysed reaction is aldehydo-D-ribose 5-phosphate + D-glyceraldehyde 3-phosphate + L-glutamine = pyridoxal 5'-phosphate + L-glutamate + phosphate + 3 H2O + H(+). It catalyses the reaction L-glutamine + H2O = L-glutamate + NH4(+). It participates in cofactor biosynthesis; pyridoxal 5'-phosphate biosynthesis. Functionally, catalyzes the hydrolysis of glutamine to glutamate and ammonia as part of the biosynthesis of pyridoxal 5'-phosphate. The resulting ammonia molecule is channeled to the active site of PdxS. This chain is Pyridoxal 5'-phosphate synthase subunit PdxT, found in Aeropyrum pernix (strain ATCC 700893 / DSM 11879 / JCM 9820 / NBRC 100138 / K1).